A 584-amino-acid chain; its full sequence is MSFVIVARDALAAAAADLAQIGSAVNAGNLAAANPTTAVAAAAADEVSAALAALFGAHAREYQAAAAQAAAYHEQFVHRLSAAATSYAVTEVTIATSLRGALGSAPASVSDGFQAFVYGPIHATGQQWINSPVGEALAPIVNAPTNVLLGRDLIGNGVTGTAAAPNGGPGGLLFGDGGAGYTGGNGGSAGLIGNGGTGGAGFAGGVGGMGGTGGWLMGNGGMGGAGGVGGNGGAGGQALLFGNGGLGGAGGAGGVDGAIGRGGWFIGTGGMATIGGGGNGQSIVIDFVRHGQTPGNAAMLIDTAVPGPGLTALGQQQAQAIANALAAKGPYAGIFDSQLIRTQQTAAPLANLLGMAPQVLPGLNEIHAGIFEDLPQISPAGLLYLVGPIAWTLGFPIVPMLAPGSTDVNGIVFNRAFTGAVQTIYDASLANPVVAADGNITSVAYSSAFTIGVGTMMNVDNPHPLLLLTHPVPNTGAVVVQGNPEGGWTLVSWDGIPVGPASLPTALFVDVRELITAPQYAAYDIWESLFTGDPAAVINAVRDGADEVGAAVVQFPHAVADDVIDATGHPYLSGLPIGLPSLIP.

The PE domain maps to 1–92; that stretch reads MSFVIVARDA…AATSYAVTEV (92 aa). His290 (tele-phosphohistidine intermediate) is an active-site residue. Glu365 functions as the Proton donor/acceptor in the catalytic mechanism. The interval 384 to 584 is phosphoglycerate mutase; the sequence is YLVGPIAWTL…LPIGLPSLIP (201 aa).

In the N-terminal section; belongs to the mycobacterial PE family. PGRS subfamily. It in the C-terminal section; belongs to the phosphoglycerate mutase family. In terms of assembly, interacts with human TLR2. Mg(2+) is required as a cofactor.

The protein resides in the secreted. The protein localises to the cell wall. It is found in the cell surface. The catalysed reaction is (2R)-2-phosphoglycerate = (2R)-3-phosphoglycerate. Induces maturation and activation of human dendritic cells (DCs), via TLR2-dependent activation of ERK1/2, p38 MAPK, and NF-kappa-B signaling pathways, and enhances the ability of DCs to stimulate CD4(+) T cells. By activating DCs, could potentially contribute to the initiation of innate immune responses during tuberculosis infection and hence regulate the clinical course of tuberculosis. Involved in resistance to oxidative stress, via TLR2-dependent activation of the PI3K-ERK1/2-NF-kappa-B signaling pathway and expression of COX-2 and Bcl2. Also abolishes H(2)O(2)-triggered activation of p38 MAPK. The protein is PE-PGRS family protein PE_PGRS11 of Mycobacterium tuberculosis (strain ATCC 25618 / H37Rv).